The following is a 101-amino-acid chain: NAD(P)H-quinone oxidoreductase subunit 4L, chloroplastic (101 aa).

The next 3 helical transmembrane spans lie at 2–22 (MLEH…YGLI), 32–52 (MCLE…SDFF), and 61–81 (IFSI…SAIV).

Belongs to the complex I subunit 4L family. As to quaternary structure, NDH is composed of at least 16 different subunits, 5 of which are encoded in the nucleus.

The protein localises to the plastid. It is found in the chloroplast thylakoid membrane. The enzyme catalyses a plastoquinone + NADH + (n+1) H(+)(in) = a plastoquinol + NAD(+) + n H(+)(out). It catalyses the reaction a plastoquinone + NADPH + (n+1) H(+)(in) = a plastoquinol + NADP(+) + n H(+)(out). Functionally, NDH shuttles electrons from NAD(P)H:plastoquinone, via FMN and iron-sulfur (Fe-S) centers, to quinones in the photosynthetic chain and possibly in a chloroplast respiratory chain. The immediate electron acceptor for the enzyme in this species is believed to be plastoquinone. Couples the redox reaction to proton translocation, and thus conserves the redox energy in a proton gradient. This Citrus sinensis (Sweet orange) protein is NAD(P)H-quinone oxidoreductase subunit 4L, chloroplastic.